The chain runs to 1907 residues: Receptor-type tyrosine-protein phosphatase S (1907 aa).

The signal sequence occupies residues 1 to 29 (MAPTWRPSVVSVVGPVGLFLVLLARGCLA). At 30 to 1257 (EEPPRFIREP…PQPIVDGEEG (1228 aa)) the chain is on the extracellular side. Ig-like C2-type domains lie at 33–123 (PRFI…AKLT), 135–224 (PNID…ANLY), and 232–314 (PRFS…AQIT). Intrachain disulfides connect C54-C107 and C156-C207. Residues 68 to 72 (KKGKK) are important for binding to glycosaminoglycan chains. N250 and N295 each carry an N-linked (GlcNAc...) asparagine glycan. A disulfide bridge connects residues C253 and C298. Fibronectin type-III domains follow at residues 321–411 (APGT…TGEQ), 416–510 (APRN…TQQG), 514–603 (QPMN…TLQA), 608–705 (PPQD…TDED), 710–809 (PPRK…TKGA), 810–906 (VLGR…APRG), 907–1008 (FPQI…LARD), and 1011–1095 (SPKN…TAFN). Over residues 691–700 (PGPESSPVVV) the composition is skewed to low complexity. Residues 691-711 (PGPESSPVVVRTDEDVPSAPP) form a disordered region. N720 is a glycosylation site (N-linked (GlcNAc...) asparagine). Residue N916 is glycosylated (N-linked (GlcNAc...) asparagine). The chain crosses the membrane as a helical span at residues 1258–1278 (LIWVIGPVLAVVFIICIVIAI). The Cytoplasmic portion of the chain corresponds to 1279–1907 (LLYKNKPDSK…YLGSFDHYAT (629 aa)). The segment covering 1286-1296 (DSKRKDSEPRT) has biased composition (basic and acidic residues). Residues 1286–1313 (DSKRKDSEPRTKCLLNNADLAPHHPKDP) are disordered. 2 consecutive Tyrosine-protein phosphatase domains span residues 1352–1607 (LSQE…LLEA) and 1639–1898 (MELE…ALEY). Substrate-binding positions include D1516, 1548–1554 (CSAGVGR), and Q1592. Residue C1548 is the Phosphocysteine intermediate of the active site. The active-site Phosphocysteine intermediate is C1839.

It belongs to the protein-tyrosine phosphatase family. Receptor class 2A subfamily. In terms of assembly, binding to large heparan sulfate proteoglycan structures promotes oligomerization. Binding to chondroitin sulfate proteoglycan does not lead to oligomerization. Interacts (via Ig-like domains) with NTRK1 and NTRK3, but does not form detectable complexes with NTRK2. Interacts with PPFIA1, PPFIA2 and PPFIA3. Post-translationally, a cleavage occurs, separating the extracellular domain from the transmembrane segment. This process called 'ectodomain shedding' is thought to be involved in receptor desensitization, signal transduction and/or membrane localization. As to expression, detected in brain neocortex (at protein level). Detected in heart, testis and liver. Detected at lower levels in skeletal muscle, brain, spleen and kidney.

Its subcellular location is the cell membrane. It localises to the cell projection. The protein resides in the axon. The protein localises to the perikaryon. It is found in the cytoplasmic vesicle. Its subcellular location is the secretory vesicle. It localises to the synaptic vesicle membrane. The protein resides in the synapse. The protein localises to the synaptosome. It is found in the postsynaptic density. Its subcellular location is the neuron projection. It localises to the growth cone. The enzyme catalyses O-phospho-L-tyrosyl-[protein] + H2O = L-tyrosyl-[protein] + phosphate. Its function is as follows. Cell surface receptor that binds to glycosaminoglycans, including chondroitin sulfate proteoglycans and heparan sulfate proteoglycans. Binding to chondroitin sulfate and heparan sulfate proteoglycans has opposite effects on PTPRS oligomerization and regulation of neurite outgrowth. Contributes to the inhibition of neurite and axonal outgrowth by chondroitin sulfate proteoglycans, also after nerve transection. Plays a role in stimulating neurite outgrowth in response to the heparan sulfate proteoglycan GPC2. Required for normal brain development, especially for normal development of the pituitary gland and the olfactory bulb. Functions as tyrosine phosphatase. Mediates dephosphorylation of NTRK1, NTRK2 and NTRK3. Plays a role in down-regulation of signaling cascades that lead to the activation of Akt and MAP kinases. Down-regulates TLR9-mediated activation of NF-kappa-B, as well as production of TNF, interferon alpha and interferon beta. The chain is Receptor-type tyrosine-protein phosphatase S (Ptprs) from Rattus norvegicus (Rat).